A 964-amino-acid polypeptide reads, in one-letter code: Glycine dehydrogenase (decarboxylating) (964 aa).

Lys-711 is modified (N6-(pyridoxal phosphate)lysine).

This sequence belongs to the GcvP family. As to quaternary structure, the glycine cleavage system is composed of four proteins: P, T, L and H. Pyridoxal 5'-phosphate serves as cofactor.

The enzyme catalyses N(6)-[(R)-lipoyl]-L-lysyl-[glycine-cleavage complex H protein] + glycine + H(+) = N(6)-[(R)-S(8)-aminomethyldihydrolipoyl]-L-lysyl-[glycine-cleavage complex H protein] + CO2. In terms of biological role, the glycine cleavage system catalyzes the degradation of glycine. The P protein binds the alpha-amino group of glycine through its pyridoxal phosphate cofactor; CO(2) is released and the remaining methylamine moiety is then transferred to the lipoamide cofactor of the H protein. The chain is Glycine dehydrogenase (decarboxylating) from Prochlorococcus marinus (strain SARG / CCMP1375 / SS120).